The chain runs to 86 residues: Small ribosomal subunit protein uS15 (86 aa).

The protein belongs to the universal ribosomal protein uS15 family. Part of the 30S ribosomal subunit. Forms a bridge to the 50S subunit in the 70S ribosome, contacting the 23S rRNA.

Its function is as follows. One of the primary rRNA binding proteins, it binds directly to 16S rRNA where it helps nucleate assembly of the platform of the 30S subunit by binding and bridging several RNA helices of the 16S rRNA. Forms an intersubunit bridge (bridge B4) with the 23S rRNA of the 50S subunit in the ribosome. In Neorickettsia sennetsu (strain ATCC VR-367 / Miyayama) (Ehrlichia sennetsu), this protein is Small ribosomal subunit protein uS15.